A 708-amino-acid chain; its full sequence is Elongation factor G 1 (708 aa).

Residues 9-295 (AKVRNIGIMA…AVVRYLPTPL (287 aa)) enclose the tr-type G domain. GTP-binding positions include 18–25 (AHIDAGKT), 86–90 (DTPGH), and 140–143 (NKLD).

This sequence belongs to the TRAFAC class translation factor GTPase superfamily. Classic translation factor GTPase family. EF-G/EF-2 subfamily.

The protein localises to the cytoplasm. Catalyzes the GTP-dependent ribosomal translocation step during translation elongation. During this step, the ribosome changes from the pre-translocational (PRE) to the post-translocational (POST) state as the newly formed A-site-bound peptidyl-tRNA and P-site-bound deacylated tRNA move to the P and E sites, respectively. Catalyzes the coordinated movement of the two tRNA molecules, the mRNA and conformational changes in the ribosome. The chain is Elongation factor G 1 (fusA) from Streptomyces coelicolor (strain ATCC BAA-471 / A3(2) / M145).